Here is a 705-residue protein sequence, read N- to C-terminus: Ribosomal RNA large subunit methyltransferase K/L (705 aa).

The 112-residue stretch at 43–154 (VVYRCCLWSR…GEKGILGFDL (112 aa)) folds into the THUMP domain.

Belongs to the methyltransferase superfamily. RlmKL family.

The protein localises to the cytoplasm. The catalysed reaction is guanosine(2445) in 23S rRNA + S-adenosyl-L-methionine = N(2)-methylguanosine(2445) in 23S rRNA + S-adenosyl-L-homocysteine + H(+). It carries out the reaction guanosine(2069) in 23S rRNA + S-adenosyl-L-methionine = N(2)-methylguanosine(2069) in 23S rRNA + S-adenosyl-L-homocysteine + H(+). In terms of biological role, specifically methylates the guanine in position 2445 (m2G2445) and the guanine in position 2069 (m7G2069) of 23S rRNA. The sequence is that of Ribosomal RNA large subunit methyltransferase K/L from Aliivibrio fischeri (strain ATCC 700601 / ES114) (Vibrio fischeri).